A 241-amino-acid polypeptide reads, in one-letter code: Type III pantothenate kinase (241 aa).

6-13 (DVGNTRIK) is a binding site for ATP. 94 to 97 (GIDR) is a substrate binding site. The active-site Proton acceptor is Asp-96. A K(+)-binding site is contributed by Asp-117. Position 120 (Thr-120) interacts with ATP. Thr-172 provides a ligand contact to substrate.

This sequence belongs to the type III pantothenate kinase family. In terms of assembly, homodimer. The cofactor is NH4(+). K(+) is required as a cofactor.

The protein resides in the cytoplasm. It carries out the reaction (R)-pantothenate + ATP = (R)-4'-phosphopantothenate + ADP + H(+). Its pathway is cofactor biosynthesis; coenzyme A biosynthesis; CoA from (R)-pantothenate: step 1/5. Catalyzes the phosphorylation of pantothenate (Pan), the first step in CoA biosynthesis. This Flavobacterium psychrophilum (strain ATCC 49511 / DSM 21280 / CIP 103535 / JIP02/86) protein is Type III pantothenate kinase.